A 250-amino-acid polypeptide reads, in one-letter code: UPF0259 membrane protein Spro_2675 (250 aa).

6 helical membrane-spanning segments follow: residues 23–43, 87–107, 132–152, 156–176, 192–212, and 222–242; these read ILML…AFSP, AATF…LTLI, LLLL…LFVV, IMAI…KGVF, VIVP…FMVS, and ASVV…IYLF.

The protein belongs to the UPF0259 family.

The protein resides in the cell inner membrane. This Serratia proteamaculans (strain 568) protein is UPF0259 membrane protein Spro_2675.